The following is a 249-amino-acid chain: DNA repair protein RecO (249 aa).

This sequence belongs to the RecO family.

In terms of biological role, involved in DNA repair and RecF pathway recombination. This chain is DNA repair protein RecO, found in Afipia carboxidovorans (strain ATCC 49405 / DSM 1227 / KCTC 32145 / OM5) (Oligotropha carboxidovorans).